Here is a 612-residue protein sequence, read N- to C-terminus: DEAD-box ATP-dependent RNA helicase 11 (612 aa).

2 disordered regions span residues 1-70 (MSAS…SGGG) and 83-104 (GAGG…WDRR). The residue at position 2 (Ser2) is an N-acetylserine. Composition is skewed to gly residues over residues 61-70 (SGGGGASGGG) and 83-94 (GAGGGGGGGGGW). A Q motif motif is present at residues 151–179 (NTFADIDLGDALNLNIRRCKYVRPTPVQR). One can recognise a Helicase ATP-binding domain in the interval 182 to 366 (IPILLAERDL…ADFMSNYIFL (185 aa)). Residue 195–202 (AQTGSGKT) coordinates ATP. The short motif at 310-313 (DEAD) is the DEAD box element. In terms of domain architecture, Helicase C-terminal spans 377-542 (LITQRVEFVQ…EVPEWLTRYA (166 aa)). Residues 547-583 (FGGGKKRSGGRFGGRDFRREGSYSRGGGGGGGGGGSD) are disordered. Positions 559–568 (GGRDFRREGS) are enriched in basic and acidic residues. The span at 570–583 (SRGGGGGGGGGGSD) shows a compositional bias: gly residues.

It belongs to the DEAD box helicase family. DDX3/DED1 subfamily.

The enzyme catalyses ATP + H2O = ADP + phosphate + H(+). This chain is DEAD-box ATP-dependent RNA helicase 11 (RH11), found in Arabidopsis thaliana (Mouse-ear cress).